A 467-amino-acid chain; its full sequence is Chromosomal replication initiator protein DnaA (467 aa).

The segment at 1–74 (MSADVWSQGC…ESVLSDLAGK (74 aa)) is domain I, interacts with DnaA modulators. Residues 74-130 (KPVRLDLQLAAREAPPRPSSDAPRSNGHPQAAGQWLGAPSSSNAGAYTQASAPTPTH) are domain II. A disordered region spans residues 85–127 (REAPPRPSSDAPRSNGHPQAAGQWLGAPSSSNAGAYTQASAPT). Over residues 112–127 (PSSSNAGAYTQASAPT) the composition is skewed to polar residues. Positions 131–347 (RLNTALTFDT…GALRKVLAYA (217 aa)) are domain III, AAA+ region. Residues G175, G177, K178, and T179 each coordinate ATP. The interval 348-467 (RFSQKDINIA…LHVLEQTLKG (120 aa)) is domain IV, binds dsDNA.

The protein belongs to the DnaA family. In terms of assembly, oligomerizes as a right-handed, spiral filament on DNA at oriC.

It localises to the cytoplasm. Its function is as follows. Plays an essential role in the initiation and regulation of chromosomal replication. ATP-DnaA binds to the origin of replication (oriC) to initiate formation of the DNA replication initiation complex once per cell cycle. Binds the DnaA box (a 9 base pair repeat at the origin) and separates the double-stranded (ds)DNA. Forms a right-handed helical filament on oriC DNA; dsDNA binds to the exterior of the filament while single-stranded (ss)DNA is stabiized in the filament's interior. The ATP-DnaA-oriC complex binds and stabilizes one strand of the AT-rich DNA unwinding element (DUE), permitting loading of DNA polymerase. After initiation quickly degrades to an ADP-DnaA complex that is not apt for DNA replication. Binds acidic phospholipids. The polypeptide is Chromosomal replication initiator protein DnaA (Methylibium petroleiphilum (strain ATCC BAA-1232 / LMG 22953 / PM1)).